A 280-amino-acid polypeptide reads, in one-letter code: 3-deoxy-manno-octulosonate cytidylyltransferase (280 aa).

This sequence belongs to the KdsB family.

It localises to the cytoplasm. The enzyme catalyses 3-deoxy-alpha-D-manno-oct-2-ulosonate + CTP = CMP-3-deoxy-beta-D-manno-octulosonate + diphosphate. It functions in the pathway nucleotide-sugar biosynthesis; CMP-3-deoxy-D-manno-octulosonate biosynthesis; CMP-3-deoxy-D-manno-octulosonate from 3-deoxy-D-manno-octulosonate and CTP: step 1/1. It participates in bacterial outer membrane biogenesis; lipopolysaccharide biosynthesis. Activates KDO (a required 8-carbon sugar) for incorporation into bacterial lipopolysaccharide in Gram-negative bacteria. The protein is 3-deoxy-manno-octulosonate cytidylyltransferase of Colwellia psychrerythraea (strain 34H / ATCC BAA-681) (Vibrio psychroerythus).